A 324-amino-acid chain; its full sequence is DNA-directed RNA polymerase subunit alpha (324 aa).

Residues 1 to 228 (MIEFQKPTIR…EHFNLFTDLS (228 aa)) are alpha N-terminal domain (alpha-NTD). The segment at 245-324 (RNKLLDMTIE…STPKEEEEEK (80 aa)) is alpha C-terminal domain (alpha-CTD).

Belongs to the RNA polymerase alpha chain family. As to quaternary structure, homodimer. The RNAP catalytic core consists of 2 alpha, 1 beta, 1 beta' and 1 omega subunit. When a sigma factor is associated with the core the holoenzyme is formed, which can initiate transcription.

It carries out the reaction RNA(n) + a ribonucleoside 5'-triphosphate = RNA(n+1) + diphosphate. Its function is as follows. DNA-dependent RNA polymerase catalyzes the transcription of DNA into RNA using the four ribonucleoside triphosphates as substrates. The sequence is that of DNA-directed RNA polymerase subunit alpha from Caldicellulosiruptor bescii (strain ATCC BAA-1888 / DSM 6725 / KCTC 15123 / Z-1320) (Anaerocellum thermophilum).